Here is a 311-residue protein sequence, read N- to C-terminus: Solute carrier family 25 member 48 (311 aa).

Solcar repeat units lie at residues 3-86, 100-205, and 214-301; these read NFQL…TQRF, PHVL…LSDW, and PSPC…SLQA. 6 helical membrane passes run 9 to 29, 61 to 81, 107 to 127, 193 to 213, 217 to 237, and 277 to 295; these read FVAG…LDTV, GMSF…GVFS, LLAS…VDLI, CLYF…ACAG, CAVW…ATPM, and ITVN…FLGY.

It belongs to the mitochondrial carrier (TC 2.A.29) family.

It localises to the mitochondrion inner membrane. The polypeptide is Solute carrier family 25 member 48 (SLC25A48) (Bos taurus (Bovine)).